Reading from the N-terminus, the 354-residue chain is Rhodopsin (354 aa).

The Extracellular portion of the chain corresponds to 1–36 (MNGTEGPNFYVPMSNKTGIVRSPFEYPQYYLAEPWK). Residues asparagine 2 and asparagine 15 are each glycosylated (N-linked (GlcNAc...) asparagine). A helical transmembrane segment spans residues 37–61 (YSVLAAYMFLLILLGLPINFMTLYV). Residues 62–73 (TIQHKKLRTPLN) lie on the Cytoplasmic side of the membrane. The helical transmembrane segment at 74 to 96 (YILLNLAFANHFMVLCGFTITMY) threads the bilayer. Over 97–110 (TSLHGYFVFGQTGC) the chain is Extracellular. Cysteine 110 and cysteine 187 are joined by a disulfide. A helical transmembrane segment spans residues 111–133 (YFEGFFATLGGEIALWSLVVLAI). The short motif at 134–136 (ERY) is the 'Ionic lock' involved in activated form stabilization element. The Cytoplasmic portion of the chain corresponds to 134-152 (ERYIVVCKPMSNFRFGENH). A helical transmembrane segment spans residues 153–173 (AMMGVAFTWIMALACAVPPLF). At 174-202 (GWSRYIPEGMQCSCGVDYYTLKPEVNNES) the chain is on the extracellular side. Residues 203–224 (FVIYMFVVHFLIPLIIISFCYG) form a helical membrane-spanning segment. Residues 225–252 (RLVCTVKEAAAQQQESATTQKAEKEVTR) are Cytoplasmic-facing. Residues 253–274 (MVVIMVIFFLICWVPYAYVAFY) form a helical membrane-spanning segment. The Extracellular portion of the chain corresponds to 275–286 (IFTHQGSEFGPI). A helical membrane pass occupies residues 287 to 308 (FMTVPAFFAKSSAIYNPVIYIM). Lysine 296 is modified (N6-(retinylidene)lysine). The Cytoplasmic portion of the chain corresponds to 309–354 (LNKQFRNCMITTLCCGKNPFGDEDASSAATSKTEATSVSTSQVSPA). Residues cysteine 322 and cysteine 323 are each lipidated (S-palmitoyl cysteine). The disordered stretch occupies residues 331–354 (EDASSAATSKTEATSVSTSQVSPA). Residues 334–354 (SSAATSKTEATSVSTSQVSPA) show a composition bias toward low complexity.

Belongs to the G-protein coupled receptor 1 family. Opsin subfamily. In terms of processing, contains one covalently linked retinal chromophore. Upon light absorption, the covalently bound 11-cis-retinal is converted to all-trans-retinal. After hydrolysis of the Schiff base and release of the covalently bound all-trans-retinal, active rhodopsin is regenerated by binding of a fresh molecule of 11-cis-retinal. In terms of tissue distribution, retina. Localized in the ventral part of the retina.

Its subcellular location is the membrane. The protein localises to the cell projection. The protein resides in the cilium. It localises to the photoreceptor outer segment. Photoreceptor required for image-forming vision at low light intensity. Required for photoreceptor cell viability after birth. May use a mixture of retinal and 3-dehydroretinal as visual pigment. Light-induced isomerization of 11-cis to all-trans retinal triggers a conformational change that activates signaling via G-proteins. Subsequent receptor phosphorylation mediates displacement of the bound G-protein alpha subunit by arrestin and terminates signaling. This Aquarana catesbeiana (American bullfrog) protein is Rhodopsin (RHO).